We begin with the raw amino-acid sequence, 621 residues long: Glutamyl-tRNA(Gln) amidotransferase subunit E (621 aa).

Belongs to the GatB/GatE family. GatE subfamily. As to quaternary structure, heterodimer of GatD and GatE.

It carries out the reaction L-glutamyl-tRNA(Gln) + L-glutamine + ATP + H2O = L-glutaminyl-tRNA(Gln) + L-glutamate + ADP + phosphate + H(+). Allows the formation of correctly charged Gln-tRNA(Gln) through the transamidation of misacylated Glu-tRNA(Gln) in organisms which lack glutaminyl-tRNA synthetase. The reaction takes place in the presence of glutamine and ATP through an activated gamma-phospho-Glu-tRNA(Gln). The GatDE system is specific for glutamate and does not act on aspartate. In Methanobrevibacter smithii (strain ATCC 35061 / DSM 861 / OCM 144 / PS), this protein is Glutamyl-tRNA(Gln) amidotransferase subunit E.